We begin with the raw amino-acid sequence, 127 residues long: Glycine cleavage system H protein (127 aa).

In terms of domain architecture, Lipoyl-binding spans 22–104; the sequence is EVVIGITHFA…YEGAWMVKVE (83 aa). The residue at position 63 (K63) is an N6-lipoyllysine.

The protein belongs to the GcvH family. The glycine cleavage system is composed of four proteins: P, T, L and H. (R)-lipoate is required as a cofactor.

Functionally, the glycine cleavage system catalyzes the degradation of glycine. The H protein shuttles the methylamine group of glycine from the P protein to the T protein. In terms of biological role, is also involved in protein lipoylation via its role as an octanoyl/lipoyl carrier protein intermediate. In Bacillus cereus (strain G9842), this protein is Glycine cleavage system H protein.